Reading from the N-terminus, the 357-residue chain is S-adenosylmethionine:tRNA ribosyltransferase-isomerase (357 aa).

Belongs to the QueA family. In terms of assembly, monomer.

It is found in the cytoplasm. The catalysed reaction is 7-aminomethyl-7-carbaguanosine(34) in tRNA + S-adenosyl-L-methionine = epoxyqueuosine(34) in tRNA + adenine + L-methionine + 2 H(+). The protein operates within tRNA modification; tRNA-queuosine biosynthesis. Transfers and isomerizes the ribose moiety from AdoMet to the 7-aminomethyl group of 7-deazaguanine (preQ1-tRNA) to give epoxyqueuosine (oQ-tRNA). This is S-adenosylmethionine:tRNA ribosyltransferase-isomerase from Phenylobacterium zucineum (strain HLK1).